We begin with the raw amino-acid sequence, 190 residues long: Xanthine phosphoribosyltransferase (190 aa).

Positions 20 and 27 each coordinate xanthine. Position 128–132 (128–132) interacts with 5-phospho-alpha-D-ribose 1-diphosphate; it reads ANGHA. Lysine 156 contacts xanthine.

Belongs to the purine/pyrimidine phosphoribosyltransferase family. Xpt subfamily. As to quaternary structure, homodimer.

It localises to the cytoplasm. The enzyme catalyses XMP + diphosphate = xanthine + 5-phospho-alpha-D-ribose 1-diphosphate. It functions in the pathway purine metabolism; XMP biosynthesis via salvage pathway; XMP from xanthine: step 1/1. Functionally, converts the preformed base xanthine, a product of nucleic acid breakdown, to xanthosine 5'-monophosphate (XMP), so it can be reused for RNA or DNA synthesis. The protein is Xanthine phosphoribosyltransferase of Pseudomonas paraeruginosa (strain DSM 24068 / PA7) (Pseudomonas aeruginosa (strain PA7)).